We begin with the raw amino-acid sequence, 186 residues long: MALLSPYSKVPELNTATVLLVENEEELQNKLANAIVQHEKDFNVNVRLAKKLPLPVENKEARPRIDLIVFIVSLLSERSLQSAESSLSHLHSDCFLGKVCFLVTDARCGSHTQERLVSVRKLAASHHCPVICAEHRTADGVSAAALRLLNILQVSAGMTPMSTTALYLSTLTRCSLTSDLQEDYLQ.

The protein localises to the nucleus. Its subcellular location is the chromosome. It localises to the centromere. Functionally, probable component of a centromeric complex involved in assembly of kinetochore proteins, mitotic progression and chromosome segregation. In Danio rerio (Zebrafish), this protein is Centromere protein M (cenpm).